We begin with the raw amino-acid sequence, 412 residues long: MGFITKAIPIVLAALSTVNGARILEAGPHAEAIPNKYIVVMKREVSDEAFNAHTTWLSQSLNSRIMRRAGSSKPMAGMQDKYSLGGIFRAYSGEFDDAMIKDISSHDDVDFIEPDFVVRTTTNGTNLTHQDNVPSWGLARVGSKKPGGTTYYYDPSAGKGVTAYIIDTGIDIDHEDFQGRAKWGENFVDQQNTDCNGHGTHVAGTVGGTKYGLAKGVSLVAVKVLDCDGSGSNSGVIKGMEWAMRQASGGGNGTAKAAGKSVMNMSLGGPRSEASNQAAKAISDAGIFMAVAAGNENMDAQHSSPASEPSVCTVAASTKDDGKADFSNYGAVVDVYAPGKDITSLKPGGSTDTLSGTSMASPHVCGLGAYLIGLGKQGGPGLCDTIKKMANDVIQSPGEGTTGKLIYNGSGK.

Residues 1-20 (MGFITKAIPIVLAALSTVNG) form the signal peptide. A propeptide spanning residues 21–126 (ARILEAGPHA…VVRTTTNGTN (106 aa)) is cleaved from the precursor. Residues 36 to 120 (KYIVVMKREV…FIEPDFVVRT (85 aa)) form the Inhibitor I9 domain. N-linked (GlcNAc...) asparagine glycans are attached at residues Asn123 and Asn126. The region spanning 135–412 (SWGLARVGSK…GKLIYNGSGK (278 aa)) is the Peptidase S8 domain. Catalysis depends on charge relay system residues Asp167 and His198. Residues Asn252 and Asn264 are each glycosylated (N-linked (GlcNAc...) asparagine). Ser358 (charge relay system) is an active-site residue. The N-linked (GlcNAc...) asparagine glycan is linked to Asn408.

The protein belongs to the peptidase S8 family.

Its subcellular location is the secreted. Functionally, secreted subtilisin-like serine protease with keratinolytic activity that contributes to pathogenicity. The chain is Subtilisin-like protease 6 (SUB6) from Trichophyton rubrum (Athlete's foot fungus).